The primary structure comprises 140 residues: MPPKAQKTPTTGGKAPAGKAPVEKKEAGKKTAAPSGEKKKRTKTRKETYSSYIYKVLKQVHPDTGISNRAMSILNSFVTTTHIFERVATEASKLAAYNKKSTISSREIQTSVRLILPGELAKHAVSEGTKAVTKYSSSTK.

The segment at 1–47 (MPPKAQKTPTTGGKAPAGKAPVEKKEAGKKTAAPSGEKKKRTKTRKE) is disordered. Lys7 bears the N6-acetyllysine; alternate mark. A Glycyl lysine isopeptide (Lys-Gly) (interchain with G-Cter in SUMO); alternate cross-link involves residue Lys7. At Lys14 the chain carries N6-acetyllysine. N6-acetyllysine; alternate is present on Lys24. A Glycyl lysine isopeptide (Lys-Gly) (interchain with G-Cter in SUMO); alternate cross-link involves residue Lys24. Lys25 is covalently cross-linked (Glycyl lysine isopeptide (Lys-Gly) (interchain with G-Cter in SUMO)). Residue Lys134 forms a Glycyl lysine isopeptide (Lys-Gly) (interchain with G-Cter in ubiquitin) linkage.

It belongs to the histone H2B family. As to quaternary structure, the nucleosome is a histone octamer containing two molecules each of H2A, H2B, H3 and H4 assembled in one H3-H4 heterotetramer and two H2A-H2B heterodimers. The octamer wraps approximately 147 bp of DNA. In terms of processing, monoubiquitinated by BRE1 to form H2BK123ub1. H2BK123ub1 gives a specific tag for epigenetic transcriptional activation and is also prerequisite for H3K4me and H3K79me formation. H2BK123ub1 also modulates the formation of double-strand breaks during meiosis and is a prerequisite for DNA-damage checkpoint activation. Post-translationally, acetylated by GCN5 to form H2BK11ac and H2BK16ac. H2BK16ac can also be formed by ESA1. Acetylation of N-terminal lysines and particularly formation of H2BK11acK16ac has a positive effect on transcription. Sumoylation to form H2BK6su and probably also H2BK16su or H2BK17su, occurs preferentially near the telomeres and represses gene transcription.

It localises to the nucleus. Its subcellular location is the chromosome. Core component of nucleosome. Nucleosomes wrap and compact DNA into chromatin, limiting DNA accessibility to the cellular machineries which require DNA as a template. Histones thereby play a central role in transcription regulation, DNA repair, DNA replication and chromosomal stability. DNA accessibility is regulated via a complex set of post-translational modifications of histones, also called histone code, and nucleosome remodeling. This is Histone H2B (HTB1) from Phaeosphaeria nodorum (strain SN15 / ATCC MYA-4574 / FGSC 10173) (Glume blotch fungus).